A 71-amino-acid polypeptide reads, in one-letter code: Large ribosomal subunit protein bL31 (71 aa).

The Zn(2+) site is built by C16, C18, C37, and C40.

This sequence belongs to the bacterial ribosomal protein bL31 family. Type A subfamily. As to quaternary structure, part of the 50S ribosomal subunit. Requires Zn(2+) as cofactor.

Binds the 23S rRNA. In Yersinia pseudotuberculosis serotype O:1b (strain IP 31758), this protein is Large ribosomal subunit protein bL31.